The following is a 92-amino-acid chain: Small ribosomal subunit protein uS19 (92 aa).

It belongs to the universal ribosomal protein uS19 family.

Protein S19 forms a complex with S13 that binds strongly to the 16S ribosomal RNA. This Rhodopseudomonas palustris (strain BisB5) protein is Small ribosomal subunit protein uS19.